The primary structure comprises 47 residues: Delta-actitoxin-Axm1d (47 aa).

Cystine bridges form between cysteine 4–cysteine 44, cysteine 6–cysteine 34, and cysteine 27–cysteine 45.

It belongs to the sea anemone sodium channel inhibitory toxin family. Type I subfamily.

Its subcellular location is the secreted. It localises to the nematocyst. In terms of biological role, binds specifically to voltage-gated sodium channels (Nav), thereby delaying their inactivation during signal transduction. Thus it strongly stimulates mammalian cardiac muscle contraction. In Anthopleura xanthogrammica (Giant green sea anemone), this protein is Delta-actitoxin-Axm1d.